The primary structure comprises 736 residues: Polyribonucleotide nucleotidyltransferase (736 aa).

D488 and D494 together coordinate Mg(2+). The 60-residue stretch at P555–I614 folds into the KH domain. An S1 motif domain is found at G624–R692.

Belongs to the polyribonucleotide nucleotidyltransferase family. Mg(2+) is required as a cofactor.

The protein resides in the cytoplasm. It catalyses the reaction RNA(n+1) + phosphate = RNA(n) + a ribonucleoside 5'-diphosphate. Involved in mRNA degradation. Catalyzes the phosphorolysis of single-stranded polyribonucleotides processively in the 3'- to 5'-direction. This chain is Polyribonucleotide nucleotidyltransferase, found in Orientia tsutsugamushi (strain Ikeda) (Rickettsia tsutsugamushi).